We begin with the raw amino-acid sequence, 253 residues long: 3-dehydroquinate dehydratase (253 aa).

3-dehydroquinate-binding positions include 46-48 (EWR) and Arg-82. His-143 functions as the Proton donor/acceptor in the catalytic mechanism. Lys-170 acts as the Schiff-base intermediate with substrate in catalysis. The 3-dehydroquinate site is built by Arg-213, Ser-232, and Gln-236.

The protein belongs to the type-I 3-dehydroquinase family. In terms of assembly, homodimer.

The catalysed reaction is 3-dehydroquinate = 3-dehydroshikimate + H2O. It functions in the pathway metabolic intermediate biosynthesis; chorismate biosynthesis; chorismate from D-erythrose 4-phosphate and phosphoenolpyruvate: step 3/7. Its activity is regulated as follows. Inhibited by flavonoids such as datiscetin, naringenin, marein and phloretin. Functionally, involved in the third step of the chorismate pathway, which leads to the biosynthesis of aromatic amino acids (AroAA). Catalyzes the cis-dehydration of 3-dehydroquinate (DHQ) and introduces the first double bond of the aromatic ring to yield 3-dehydroshikimate. The reaction involves the formation of an imine intermediate between the keto group of 3-dehydroquinate and the epsilon-amino group of Lys-170 at the active site. The sequence is that of 3-dehydroquinate dehydratase from Enterococcus faecalis (strain ATCC 700802 / V583).